Here is a 214-residue protein sequence, read N- to C-terminus: Adenylate kinase (214 aa).

Residue 10 to 15 (GAGKGT) participates in ATP binding. Residues 30 to 59 (STGDMLRAAIKAGTELGKQAKSVIDAGQLV) are NMP. AMP is bound by residues threonine 31, arginine 36, 57–59 (QLV), 85–88 (GFPR), and glutamine 92. Positions 122–159 (GRRAHLASGRTYHNVYNPPKVEGKDDVTGEDLVIREDD) are LID. Residues arginine 123 and 132–133 (TY) contribute to the ATP site. AMP-binding residues include arginine 156 and arginine 167. Lysine 200 is an ATP binding site.

This sequence belongs to the adenylate kinase family. In terms of assembly, monomer.

Its subcellular location is the cytoplasm. It carries out the reaction AMP + ATP = 2 ADP. The protein operates within purine metabolism; AMP biosynthesis via salvage pathway; AMP from ADP: step 1/1. Its function is as follows. Catalyzes the reversible transfer of the terminal phosphate group between ATP and AMP. Plays an important role in cellular energy homeostasis and in adenine nucleotide metabolism. This Photobacterium profundum (strain SS9) protein is Adenylate kinase.